Consider the following 82-residue polypeptide: Putative membrane protein insertion efficiency factor (82 aa).

It belongs to the UPF0161 family.

It is found in the cell inner membrane. Its function is as follows. Could be involved in insertion of integral membrane proteins into the membrane. This is Putative membrane protein insertion efficiency factor from Colwellia psychrerythraea (strain 34H / ATCC BAA-681) (Vibrio psychroerythus).